A 128-amino-acid chain; its full sequence is MNLIQQLEKEQFDKLSANKTIPEFGPGDTVIVNVKVVEGERTRVQAYEGVCIGRSGGGINESFTVRKISYGEGVERVFPILSPMIDSIKVVRRGKVRRAKLYYLRQLRGKSARIVEKQDRQQAAAVNE.

The protein belongs to the bacterial ribosomal protein bL19 family.

Its function is as follows. This protein is located at the 30S-50S ribosomal subunit interface and may play a role in the structure and function of the aminoacyl-tRNA binding site. This chain is Large ribosomal subunit protein bL19, found in Bradyrhizobium sp. (strain ORS 278).